The sequence spans 488 residues: Proline--tRNA ligase (488 aa).

The protein belongs to the class-II aminoacyl-tRNA synthetase family. ProS type 3 subfamily. Homodimer.

Its subcellular location is the cytoplasm. It carries out the reaction tRNA(Pro) + L-proline + ATP = L-prolyl-tRNA(Pro) + AMP + diphosphate. In terms of biological role, catalyzes the attachment of proline to tRNA(Pro) in a two-step reaction: proline is first activated by ATP to form Pro-AMP and then transferred to the acceptor end of tRNA(Pro). This is Proline--tRNA ligase from Borreliella afzelii (strain PKo) (Borrelia afzelii).